The sequence spans 158 residues: 6,7-dimethyl-8-ribityllumazine synthase (158 aa).

5-amino-6-(D-ribitylamino)uracil is bound by residues phenylalanine 23, 61–63 (SFE), and 85–87 (AVI). Position 90 to 91 (90 to 91 (ET)) interacts with (2S)-2-hydroxy-3-oxobutyl phosphate. Histidine 93 serves as the catalytic Proton donor. Phenylalanine 118 is a binding site for 5-amino-6-(D-ribitylamino)uracil. Arginine 132 serves as a coordination point for (2S)-2-hydroxy-3-oxobutyl phosphate.

Belongs to the DMRL synthase family.

It carries out the reaction (2S)-2-hydroxy-3-oxobutyl phosphate + 5-amino-6-(D-ribitylamino)uracil = 6,7-dimethyl-8-(1-D-ribityl)lumazine + phosphate + 2 H2O + H(+). It functions in the pathway cofactor biosynthesis; riboflavin biosynthesis; riboflavin from 2-hydroxy-3-oxobutyl phosphate and 5-amino-6-(D-ribitylamino)uracil: step 1/2. Its function is as follows. Catalyzes the formation of 6,7-dimethyl-8-ribityllumazine by condensation of 5-amino-6-(D-ribitylamino)uracil with 3,4-dihydroxy-2-butanone 4-phosphate. This is the penultimate step in the biosynthesis of riboflavin. In Prochlorococcus marinus (strain MIT 9312), this protein is 6,7-dimethyl-8-ribityllumazine synthase.